Here is a 223-residue protein sequence, read N- to C-terminus: MNIAKMIDHTLLKPNATKSEIEKLCNEAKEYGFASVCINPCFVDLAYSMLKDTDVKVCTVIGFPLGANTIESKVFEAVDAVKRGATEVDMVLNVSMLKSGDYDYVKKEIEEVVKAVKSYGDIVVKVILETCYLTDEEKVKACQLTREAGADFVKTSTGFGPGGATVEDVKLMRQTVGENFGVKASGCVRTAEDAKAMIEAGANRIGASAGVKIAEEWNKLKMS.

Asp-89 acts as the Proton donor/acceptor in catalysis. The Schiff-base intermediate with acetaldehyde role is filled by Lys-154. The Proton donor/acceptor role is filled by Lys-183.

The protein belongs to the DeoC/FbaB aldolase family. DeoC type 1 subfamily.

It localises to the cytoplasm. It carries out the reaction 2-deoxy-D-ribose 5-phosphate = D-glyceraldehyde 3-phosphate + acetaldehyde. The protein operates within carbohydrate degradation; 2-deoxy-D-ribose 1-phosphate degradation; D-glyceraldehyde 3-phosphate and acetaldehyde from 2-deoxy-alpha-D-ribose 1-phosphate: step 2/2. Catalyzes a reversible aldol reaction between acetaldehyde and D-glyceraldehyde 3-phosphate to generate 2-deoxy-D-ribose 5-phosphate. This is Deoxyribose-phosphate aldolase from Thermoanaerobacter pseudethanolicus (strain ATCC 33223 / 39E) (Clostridium thermohydrosulfuricum).